Consider the following 477-residue polypeptide: Glycogen synthase 1 (477 aa).

ADP-alpha-D-glucose is bound at residue Lys-15.

Belongs to the glycosyltransferase 1 family. Bacterial/plant glycogen synthase subfamily.

The catalysed reaction is [(1-&gt;4)-alpha-D-glucosyl](n) + ADP-alpha-D-glucose = [(1-&gt;4)-alpha-D-glucosyl](n+1) + ADP + H(+). It functions in the pathway glycan biosynthesis; glycogen biosynthesis. Synthesizes alpha-1,4-glucan chains using ADP-glucose. The chain is Glycogen synthase 1 (glgA1) from Synechocystis sp. (strain ATCC 27184 / PCC 6803 / Kazusa).